Here is a 545-residue protein sequence, read N- to C-terminus: CTP synthase (545 aa).

An amidoligase domain region spans residues 1-266; the sequence is MTTNYIFVTG…DDYICKRFSL (266 aa). Serine 14 contacts CTP. Serine 14 contributes to the UTP binding site. Residues 15–20 and aspartate 72 contribute to the ATP site; that span reads SLGKGI. Mg(2+)-binding residues include aspartate 72 and glutamate 140. Residues 147–149, 187–192, and lysine 223 each bind CTP; these read DIE and KTKPTQ. UTP is bound by residues 187-192 and lysine 223; that span reads KTKPTQ. 239–241 contacts ATP; it reads KDV. Residues 291–542 enclose the Glutamine amidotransferase type-1 domain; that stretch reads TIGMVGKYIE…VKAASEHQKR (252 aa). Glycine 352 contacts L-glutamine. The Nucleophile; for glutamine hydrolysis role is filled by cysteine 379. L-glutamine-binding positions include 380-383, glutamate 403, and arginine 470; that span reads LGMQ. Residues histidine 515 and glutamate 517 contribute to the active site.

The protein belongs to the CTP synthase family. In terms of assembly, homotetramer.

The catalysed reaction is UTP + L-glutamine + ATP + H2O = CTP + L-glutamate + ADP + phosphate + 2 H(+). The enzyme catalyses L-glutamine + H2O = L-glutamate + NH4(+). It carries out the reaction UTP + NH4(+) + ATP = CTP + ADP + phosphate + 2 H(+). It functions in the pathway pyrimidine metabolism; CTP biosynthesis via de novo pathway; CTP from UDP: step 2/2. Its activity is regulated as follows. Allosterically activated by GTP, when glutamine is the substrate; GTP has no effect on the reaction when ammonia is the substrate. The allosteric effector GTP functions by stabilizing the protein conformation that binds the tetrahedral intermediate(s) formed during glutamine hydrolysis. Inhibited by the product CTP, via allosteric rather than competitive inhibition. Functionally, catalyzes the ATP-dependent amination of UTP to CTP with either L-glutamine or ammonia as the source of nitrogen. Regulates intracellular CTP levels through interactions with the four ribonucleotide triphosphates. The chain is CTP synthase from Salmonella schwarzengrund (strain CVM19633).